The chain runs to 228 residues: 2,3-bisphosphoglycerate-dependent phosphoglycerate mutase (228 aa).

Residues 7–14 (RHGESAWN), 20–21 (TG), R59, 86–89 (ERHY), K97, 113–114 (RR), and 182–183 (GN) contribute to the substrate site. H8 serves as the catalytic Tele-phosphohistidine intermediate. The Proton donor/acceptor role is filled by E86.

Belongs to the phosphoglycerate mutase family. BPG-dependent PGAM subfamily.

It catalyses the reaction (2R)-2-phosphoglycerate = (2R)-3-phosphoglycerate. The protein operates within carbohydrate degradation; glycolysis; pyruvate from D-glyceraldehyde 3-phosphate: step 3/5. Catalyzes the interconversion of 2-phosphoglycerate and 3-phosphoglycerate. In Fusobacterium nucleatum subsp. nucleatum (strain ATCC 25586 / DSM 15643 / BCRC 10681 / CIP 101130 / JCM 8532 / KCTC 2640 / LMG 13131 / VPI 4355), this protein is 2,3-bisphosphoglycerate-dependent phosphoglycerate mutase.